The following is a 265-amino-acid chain: Tryptophan synthase alpha chain (265 aa).

Residues Glu-49 and Asp-60 each act as proton acceptor in the active site.

Belongs to the TrpA family. As to quaternary structure, tetramer of two alpha and two beta chains.

It catalyses the reaction (1S,2R)-1-C-(indol-3-yl)glycerol 3-phosphate + L-serine = D-glyceraldehyde 3-phosphate + L-tryptophan + H2O. The protein operates within amino-acid biosynthesis; L-tryptophan biosynthesis; L-tryptophan from chorismate: step 5/5. In terms of biological role, the alpha subunit is responsible for the aldol cleavage of indoleglycerol phosphate to indole and glyceraldehyde 3-phosphate. The chain is Tryptophan synthase alpha chain from Polynucleobacter asymbioticus (strain DSM 18221 / CIP 109841 / QLW-P1DMWA-1) (Polynucleobacter necessarius subsp. asymbioticus).